Here is a 274-residue protein sequence, read N- to C-terminus: NH(3)-dependent NAD(+) synthetase (274 aa).

An ATP-binding site is contributed by 46–53 (GISGGQDS). A Mg(2+)-binding site is contributed by Asp-52. A deamido-NAD(+)-binding site is contributed by Arg-140. ATP is bound at residue Thr-160. Glu-165 contributes to the Mg(2+) binding site. The deamido-NAD(+) site is built by Lys-173 and Asp-180. ATP is bound by residues Lys-189 and Thr-211. 260-261 (HK) contacts deamido-NAD(+).

It belongs to the NAD synthetase family. Homodimer.

The catalysed reaction is deamido-NAD(+) + NH4(+) + ATP = AMP + diphosphate + NAD(+) + H(+). The protein operates within cofactor biosynthesis; NAD(+) biosynthesis; NAD(+) from deamido-NAD(+) (ammonia route): step 1/1. In terms of biological role, catalyzes the ATP-dependent amidation of deamido-NAD to form NAD. Uses ammonia as a nitrogen source. This is NH(3)-dependent NAD(+) synthetase from Streptococcus pneumoniae (strain 70585).